The primary structure comprises 118 residues: MATDTGSGRGKGGKGVTLGKGSKGAKASKGGKRIRTKTQQDALKGITKPAIRRLARRGGVKRINGAVYDETRNVLKQFLEQVIRDSVTYTEHAKRRTVTAMDVVYALKRQGRTLYGYS.

The interval 1–39 is disordered; that stretch reads MATDTGSGRGKGGKGVTLGKGSKGAKASKGGKRIRTKTQ. Residues 7–22 show a composition bias toward gly residues; that stretch reads SGRGKGGKGVTLGKGS.

It belongs to the histone H4 family. The nucleosome is a histone octamer containing two molecules each of H2A, H2B, H3 and H4 assembled in one H3-H4 heterotetramer and two H2A-H2B heterodimers. The octamer wraps approximately 147 bp of DNA.

It localises to the nucleus. Its subcellular location is the chromosome. Functionally, core component of nucleosome. Nucleosomes wrap and compact DNA into chromatin, limiting DNA accessibility to the cellular machineries which require DNA as a template. Histones thereby play a central role in transcription regulation, DNA repair, DNA replication and chromosomal stability. DNA accessibility is regulated via a complex set of post-translational modifications of histones, also called histone code, and nucleosome remodeling. The polypeptide is Histone H4 (Entamoeba histolytica (strain ATCC 30459 / HM-1:IMSS / ABRM)).